The primary structure comprises 284 residues: MESFSELSLQFSQLSMFPFFETAHYLTSVMSAREQAGAVDVASRSPLASWFSSMLYCFGGGILSSILLAEPPVGILSNTTSIILASAVWYMVYYFPYDLFYNCFFFLPIRLILAGMKEVTRTWKILSGVAHAHSHYKDAMLVMITIGWARGAGGGLISNFEQLVRGVWKPESNEFLKMSYPVKVTLIGAVLFTLQHGQYLPISRHNLMFIYTLFLILIKVTMMLTRSTASPFLPLETSLQHILFSRQQIPAEVRESPSSSGDKGKPSKKTLDKDSGEQDNKKDN.

Residues 1–15 (MESFSELSLQFSQLS) are Lumenal-facing. Residues 16 to 32 (MFPFFETAHYLTSVMSA) form a helical membrane-spanning segment. The Cytoplasmic portion of the chain corresponds to 33 to 44 (REQAGAVDVASR). A helical transmembrane segment spans residues 45–68 (SPLASWFSSMLYCFGGGILSSILL). Over 69–79 (AEPPVGILSNT) the chain is Lumenal. A helical membrane pass occupies residues 80–99 (TSIILASAVWYMVYYFPYDL). Over 100-102 (FYN) the chain is Cytoplasmic. The chain crosses the membrane as a helical span at residues 103 to 121 (CFFFLPIRLILAGMKEVTR). Lys-117 and Arg-121 together coordinate a 1,2-diacyl-sn-glycero-3-phospho-(1D-myo-inositol-4,5-bisphosphate). Residues 122-139 (TWKILSGVAHAHSHYKDA) are Lumenal-facing. The helical transmembrane segment at 140-157 (MLVMITIGWARGAGGGLI) threads the bilayer. The Cytoplasmic portion of the chain corresponds to 158–178 (SNFEQLVRGVWKPESNEFLKM). A helical membrane pass occupies residues 179–196 (SYPVKVTLIGAVLFTLQH). The Lumenal portion of the chain corresponds to 197–204 (GQYLPISR). Residues 205 to 225 (HNLMFIYTLFLILIKVTMMLT) traverse the membrane as a helical segment. Over 226–284 (RSTASPFLPLETSLQHILFSRQQIPAEVRESPSSSGDKGKPSKKTLDKDSGEQDNKKDN) the chain is Cytoplasmic. The disordered stretch occupies residues 250-284 (PAEVRESPSSSGDKGKPSKKTLDKDSGEQDNKKDN). A compositionally biased stretch (basic and acidic residues) spans 262-284 (DKGKPSKKTLDKDSGEQDNKKDN).

This sequence belongs to the TMEM38 family. In terms of assembly, homotrimer; conformation seems to be controled by binding to diacylglycerol (DAG).

The protein resides in the endoplasmic reticulum membrane. The catalysed reaction is K(+)(in) = K(+)(out). With respect to regulation, channel activity is activated by increased cytosolic Ca(2+) levels and blocked by luminal high Ca(2+) levels. Functionally, intracellular monovalent cation channel required for maintenance of rapid intracellular calcium release. Acts as a potassium counter-ion channel that functions in synchronization with calcium release from intracellular stores. Activated by increased cytosolic Ca(2+) levels. The protein is Trimeric intracellular cation channel type B (tmem38b) of Xenopus tropicalis (Western clawed frog).